Consider the following 655-residue polypeptide: Alpha-amylase (655 aa).

The Nucleophile role is filled by Glu123. Residue Asp214 is the Proton donor of the active site.

This sequence belongs to the glycosyl hydrolase 57 family.

The catalysed reaction is Endohydrolysis of (1-&gt;4)-alpha-D-glucosidic linkages in polysaccharides containing three or more (1-&gt;4)-alpha-linked D-glucose units.. This chain is Alpha-amylase (amyA), found in Pyrococcus abyssi (strain GE5 / Orsay).